The sequence spans 320 residues: Phosphatidylserine decarboxylase proenzyme (320 aa).

Catalysis depends on charge relay system; for autoendoproteolytic cleavage activity residues aspartate 90, histidine 147, and serine 254. The active-site Schiff-base intermediate with substrate; via pyruvic acid; for decarboxylase activity is serine 254. Position 254 is a pyruvic acid (Ser); by autocatalysis (serine 254). Residues 288-320 are disordered; the sequence is EASTAAEPAPLPEEEIRAEHRASPLVDDTQDQG.

This sequence belongs to the phosphatidylserine decarboxylase family. PSD-B subfamily. Prokaryotic type I sub-subfamily. As to quaternary structure, heterodimer of a large membrane-associated beta subunit and a small pyruvoyl-containing alpha subunit. The cofactor is pyruvate. In terms of processing, is synthesized initially as an inactive proenzyme. Formation of the active enzyme involves a self-maturation process in which the active site pyruvoyl group is generated from an internal serine residue via an autocatalytic post-translational modification. Two non-identical subunits are generated from the proenzyme in this reaction, and the pyruvate is formed at the N-terminus of the alpha chain, which is derived from the carboxyl end of the proenzyme. The autoendoproteolytic cleavage occurs by a canonical serine protease mechanism, in which the side chain hydroxyl group of the serine supplies its oxygen atom to form the C-terminus of the beta chain, while the remainder of the serine residue undergoes an oxidative deamination to produce ammonia and the pyruvoyl prosthetic group on the alpha chain. During this reaction, the Ser that is part of the protease active site of the proenzyme becomes the pyruvoyl prosthetic group, which constitutes an essential element of the active site of the mature decarboxylase.

It localises to the cell membrane. It catalyses the reaction a 1,2-diacyl-sn-glycero-3-phospho-L-serine + H(+) = a 1,2-diacyl-sn-glycero-3-phosphoethanolamine + CO2. It functions in the pathway phospholipid metabolism; phosphatidylethanolamine biosynthesis; phosphatidylethanolamine from CDP-diacylglycerol: step 2/2. In terms of biological role, catalyzes the formation of phosphatidylethanolamine (PtdEtn) from phosphatidylserine (PtdSer). In Klebsiella pneumoniae (strain 342), this protein is Phosphatidylserine decarboxylase proenzyme.